The chain runs to 97 residues: Large ribosomal subunit protein uL23 (97 aa).

Belongs to the universal ribosomal protein uL23 family. Part of the 50S ribosomal subunit. Contacts protein L29, and trigger factor when it is bound to the ribosome.

One of the early assembly proteins it binds 23S rRNA. One of the proteins that surrounds the polypeptide exit tunnel on the outside of the ribosome. Forms the main docking site for trigger factor binding to the ribosome. The polypeptide is Large ribosomal subunit protein uL23 (Bartonella henselae (strain ATCC 49882 / DSM 28221 / CCUG 30454 / Houston 1) (Rochalimaea henselae)).